The sequence spans 502 residues: NAD(P)H-quinone oxidoreductase chain 4, chloroplastic (502 aa).

14 helical membrane-spanning segments follow: residues 4–24 (FPWLTVIVVLPISAGSSIFFV), 37–57 (YTICICLLEILLTTYAFCYHF), 86–106 (GLSIGPILLTGFITTLATLAA), 113–131 (SRLFHFLMLAMYSGQVGSF), 136–156 (LLLFFLMWELELIPVYLLLSM), 169–189 (FILYTAGGSIFLLMGVSGMGL), 210–230 (GLEIIFYFGFLIAYAVKSPII), 244–264 (HYSTCMLLAGILLKMGAYGLV), 274–294 (AHSIFSPWLVIVGAIQIIYAA), 307–327 (IAYSSVSHMGFTLIGIGSITD), 332–352 (GAILQIISHGFIGAALFFLAG), 388–408 (LALPGMSGFVAELVVFFGIIT), 418–438 (IVISFVMAIGMILTPIYSLSM), and 464–484 (LFVSICIFLPVVGIGIYPDFV).

The protein belongs to the complex I subunit 4 family.

Its subcellular location is the plastid. The protein resides in the chloroplast thylakoid membrane. The catalysed reaction is a plastoquinone + NADH + (n+1) H(+)(in) = a plastoquinol + NAD(+) + n H(+)(out). It catalyses the reaction a plastoquinone + NADPH + (n+1) H(+)(in) = a plastoquinol + NADP(+) + n H(+)(out). This Calycanthus floridus var. glaucus (Eastern sweetshrub) protein is NAD(P)H-quinone oxidoreductase chain 4, chloroplastic.